A 257-amino-acid chain; its full sequence is Indole-3-glycerol phosphate synthase (257 aa).

The protein belongs to the TrpC family.

The enzyme catalyses 1-(2-carboxyphenylamino)-1-deoxy-D-ribulose 5-phosphate + H(+) = (1S,2R)-1-C-(indol-3-yl)glycerol 3-phosphate + CO2 + H2O. It functions in the pathway amino-acid biosynthesis; L-tryptophan biosynthesis; L-tryptophan from chorismate: step 4/5. The sequence is that of Indole-3-glycerol phosphate synthase from Phenylobacterium zucineum (strain HLK1).